Here is a 355-residue protein sequence, read N- to C-terminus: Putative testis-specific Y-encoded-like protein 3 (355 aa).

Residues 1 to 131 (MADKRAGTPE…GEEKQEVAAE (131 aa)) are disordered. The span at 93-128 (ASEKAEDANKEEGAIFKKEPAEEVEKQQEGEEKQEV) shows a compositional bias: basic and acidic residues.

Belongs to the nucleosome assembly protein (NAP) family.

This is Putative testis-specific Y-encoded-like protein 3 (TSPY26P) from Homo sapiens (Human).